Consider the following 128-residue polypeptide: Large ribosomal subunit protein bL20c (128 aa).

The protein belongs to the bacterial ribosomal protein bL20 family.

The protein localises to the plastid. Its function is as follows. Binds directly to 23S ribosomal RNA and is necessary for the in vitro assembly process of the 50S ribosomal subunit. It is not involved in the protein synthesizing functions of that subunit. The protein is Large ribosomal subunit protein bL20c (rpl20) of Lathraea clandestina (Purple toothwort).